A 227-amino-acid polypeptide reads, in one-letter code: UPF0758 protein PG_0894 (227 aa).

One can recognise an MPN domain in the interval 104–227 (SITDSRMAYR…YFSFADEGLL (124 aa)). His-175, His-177, and Asp-188 together coordinate Zn(2+). Positions 175-188 (HNHPSGTVRPSEQD) match the JAMM motif motif.

The protein belongs to the UPF0758 family.

This chain is UPF0758 protein PG_0894, found in Porphyromonas gingivalis (strain ATCC BAA-308 / W83).